Consider the following 446-residue polypeptide: Probable 1,4-beta-D-glucan cellobiohydrolase A (446 aa).

An N-terminal signal peptide occupies residues Met1–Ala17. Residue Asn81 is glycosylated (N-linked (GlcNAc...) asparagine). The active-site Nucleophile is Glu226. The active-site Proton donor is the Glu231. 2 N-linked (GlcNAc...) asparagine glycosylation sites follow: Asn284 and Asn333. The segment at Thr399–Pro420 is disordered.

The protein belongs to the glycosyl hydrolase 7 (cellulase C) family.

The protein localises to the secreted. It catalyses the reaction Hydrolysis of (1-&gt;4)-beta-D-glucosidic linkages in cellulose and cellotetraose, releasing cellobiose from the non-reducing ends of the chains.. The biological conversion of cellulose to glucose generally requires three types of hydrolytic enzymes: (1) Endoglucanases which cut internal beta-1,4-glucosidic bonds; (2) Exocellobiohydrolases that cut the disaccharide cellobiose from the non-reducing end of the cellulose polymer chain; (3) Beta-1,4-glucosidases which hydrolyze the cellobiose and other short cello-oligosaccharides to glucose. This Emericella nidulans (strain FGSC A4 / ATCC 38163 / CBS 112.46 / NRRL 194 / M139) (Aspergillus nidulans) protein is Probable 1,4-beta-D-glucan cellobiohydrolase A (cbhA).